Reading from the N-terminus, the 133-residue chain is Ribonuclease P protein component (133 aa).

It belongs to the RnpA family. Consists of a catalytic RNA component (M1 or rnpB) and a protein subunit.

It catalyses the reaction Endonucleolytic cleavage of RNA, removing 5'-extranucleotides from tRNA precursor.. Functionally, RNaseP catalyzes the removal of the 5'-leader sequence from pre-tRNA to produce the mature 5'-terminus. It can also cleave other RNA substrates such as 4.5S RNA. The protein component plays an auxiliary but essential role in vivo by binding to the 5'-leader sequence and broadening the substrate specificity of the ribozyme. The chain is Ribonuclease P protein component from Pseudomonas putida (strain ATCC 47054 / DSM 6125 / CFBP 8728 / NCIMB 11950 / KT2440).